The sequence spans 343 residues: Sodium/bile acid cotransporter 7 (343 aa).

Residues 1–10 (MGLLERLRKE) lie on the Cytoplasmic side of the membrane. Residues 11-31 (WFIVGIILVIAAAKLEPTIGG) form a helical membrane-spanning segment. At 32 to 37 (KGGPLK) the chain is on the extracellular side. Residues 38–58 (PEITITYIAVSAIFFNSGLSL) traverse the membrane as a helical segment. The Cytoplasmic segment spans residues 59–71 (KTEELTNALMHVK). Residues 72 to 92 (LHLFVQLFTLVFFPTAIWVFL) form a helical membrane-spanning segment. Residues 93-116 (QVLSLTPINEWLLKGLQTVSCMPP) lie on the Extracellular side of the membrane. The helical transmembrane segment at 117–137 (PVSSAVILTKAVGGNEAAAIF) threads the bilayer. Position 138 (Asn-138) is a topological domain, cytoplasmic. A helical membrane pass occupies residues 139–159 (SAFGSFLGIVVTPLLLLLFLG). The Extracellular portion of the chain corresponds to 160–163 (SSSS). Residues 164 to 184 (VPFTSIFSQLFMTVVVPLIIG) form a helical membrane-spanning segment. Residues 185–201 (QIVRRYIKDWLERKKPP) are Cytoplasmic-facing. Residues 202-222 (FGAISSCVLLMIIYTTFCDTF) form a helical membrane-spanning segment. The Extracellular segment spans residues 223–234 (SNPNIDLDTFSL). The helical transmembrane segment at 235-255 (VIIVFIIFFIQLAFMLLTFLF) threads the bilayer. The Cytoplasmic portion of the chain corresponds to 256–270 (STSKNTGFTPADTVA). Residues 271-291 (IVFCSTHKSLTLGIPMLKIVF) form a helical membrane-spanning segment. The Extracellular segment spans residues 292–298 (AGYEHLS). A helical transmembrane segment spans residues 299-319 (LISVPLLIYHPAQILLGSVLV). Residues 320-343 (PTIKSWMLSRQKALKLTRQPKVPL) lie on the Cytoplasmic side of the membrane.

The protein belongs to the bile acid:sodium symporter (BASS) (TC 2.A.28) family.

It is found in the cell membrane. The protein localises to the endoplasmic reticulum membrane. Its subcellular location is the golgi apparatus membrane. In terms of biological role, involved in teeth and skeletal development. Has an essential role in the biosynthesis and trafficking of glycosaminoglycans and glycoproteins to produce a proper functioning extracellular matrix. Required for extracellular matrix mineralization. Also involved in the regulation of cellular calcium homeostasis. Does not show transport activity towards bile acids or steroid sulfates. The sequence is that of Sodium/bile acid cotransporter 7 (slc10a7) from Xenopus tropicalis (Western clawed frog).